Reading from the N-terminus, the 146-residue chain is Large ribosomal subunit protein uL15 (146 aa).

The interval 1-58 (MNLSELRPAPGARKKPTRKGQGIGSGLGKTAGKGHKGQNARSGGGVRPGFEGGQMPLQ) is disordered. Gly residues-rich tracts occupy residues 21–31 (QGIGSGLGKTA) and 42–52 (SGGGVRPGFEG).

The protein belongs to the universal ribosomal protein uL15 family. As to quaternary structure, part of the 50S ribosomal subunit.

In terms of biological role, binds to the 23S rRNA. This is Large ribosomal subunit protein uL15 from Desulforamulus reducens (strain ATCC BAA-1160 / DSM 100696 / MI-1) (Desulfotomaculum reducens).